Here is a 267-residue protein sequence, read N- to C-terminus: Protein COFACTOR ASSEMBLY OF COMPLEX C SUBUNIT B CCB1, chloroplastic (267 aa).

Residues M1 to T44 constitute a chloroplast transit peptide. Residues A45 to L84 are Lumenal-facing. A helical transmembrane segment spans residues A85–I105. Residues K106–Q164 are Stromal-facing. Residues A165–I185 form a helical membrane-spanning segment. Position 186 (T186) is a topological domain, lumenal. The helical transmembrane segment at V187–Y207 threads the bilayer. Over Y208–S267 the chain is Stromal.

It is found in the plastid. The protein localises to the chloroplast thylakoid membrane. Functionally, required for the biogenesis and accumulation of native cytochrome b6 in the thylakoid membrane. Controls the conversion of apocytochrome b6 to holocytochrome b6. Required for covalent binding of the c-type heme to cytochrome b6. The polypeptide is Protein COFACTOR ASSEMBLY OF COMPLEX C SUBUNIT B CCB1, chloroplastic (Arabidopsis thaliana (Mouse-ear cress)).